Consider the following 161-residue polypeptide: Glycine cleavage system H protein 3 (161 aa).

In terms of domain architecture, Lipoyl-binding spans 40-122 (TVTLGLTDVG…YGDAWIVKIK (83 aa)). Lysine 81 is modified (N6-lipoyllysine).

It belongs to the GcvH family. As to quaternary structure, the glycine cleavage system is composed of four proteins: P, T, L and H. Requires (R)-lipoate as cofactor.

In terms of biological role, the glycine cleavage system catalyzes the degradation of glycine. The H protein shuttles the methylamine group of glycine from the P protein to the T protein. The protein is Glycine cleavage system H protein 3 of Aquifex aeolicus (strain VF5).